The sequence spans 506 residues: Dolabradiene monooxygenase (506 aa).

Residues 5–25 (VLLAVAMVALIAVLSKLKSLL) form a helical membrane-spanning segment. Position 443 (Cys443) interacts with heme.

The protein belongs to the cytochrome P450 family. It depends on heme as a cofactor.

The protein localises to the membrane. The catalysed reaction is dolabradiene + reduced [NADPH--hemoprotein reductase] + O2 = 15,16-epoxydolabrene + oxidized [NADPH--hemoprotein reductase] + H2O + H(+). The enzyme catalyses 15,16-epoxydolabrene + reduced [NADPH--hemoprotein reductase] + O2 = 3beta-hydroxy-15,16-epoxydolabrene + oxidized [NADPH--hemoprotein reductase] + H2O + H(+). Involved in the production of antifungal dolabralexin phytoalexins in response to biotic and abiotic stresses. Catalyzes the epoxidation of dolabradiene at C-16, followed by hydroxylation at C-3, to yield the epoxides 15,16-epoxydolabrene (epoxydolabrene) and 3b-hydroxy-15,16-epoxydolabrene (epoxydolabranol). The protein is Dolabradiene monooxygenase of Zea mays (Maize).